The sequence spans 416 residues: Enterobactin exporter EntS (416 aa).

Topologically, residues 1–21 (MNKQSWLLNLSLLKTHPAFRA) are cytoplasmic. The chain crosses the membrane as a helical span at residues 22 to 42 (VFLARFISIVSLGLLGVAVPV). At 43-55 (QIQMMTHSTWQVG) the chain is on the periplasmic side. Residues 56–76 (LSVTLTGGAMFVGLMVGGVLA) traverse the membrane as a helical segment. Over 77 to 83 (DRYERKK) the chain is Cytoplasmic. A helical transmembrane segment spans residues 84–104 (VILLARGTCGIGFIGLCLNAL). Over 105-109 (LPEPS) the chain is Periplasmic. The helical transmembrane segment at 110–130 (LLAIYLLGLWDGFFASLGVTA) threads the bilayer. At 131–156 (LLAATPALVGRENLMQAGAITMLTVR) the chain is on the cytoplasmic side. Residues 157–177 (LGSVISPMIGGLLLATGGVAW) form a helical membrane-spanning segment. A topological domain (periplasmic) is located at residue N178. Residues 179–199 (YGLAAAGTFITLLPLLSLPAL) traverse the membrane as a helical segment. Residues 200–218 (PPPPQPREHPLKSLLAGFR) are Cytoplasmic-facing. The chain crosses the membrane as a helical span at residues 219–239 (FLLASPLVGGIALLGGLLTMA). Over 240-256 (SAVRVLYPALADNWQMS) the chain is Periplasmic. Residues 257 to 277 (AAQIGFLYAAIPLGAAIGALT) form a helical membrane-spanning segment. Over 278-287 (SGKLAHSARP) the chain is Cytoplasmic. A helical transmembrane segment spans residues 288–307 (GLLMLLSTLGSFLAIGLFGL). Residues 308–313 (MPMWIL) lie on the Periplasmic side of the membrane. A helical transmembrane segment spans residues 314–336 (GVVCLALFGWLSAVSSLLQYTML). Residues 337–356 (QTQTPEAMLGRINGLWTAQN) lie on the Cytoplasmic side of the membrane. Residues 357-377 (VTGDAIGAALLGGLGAMMTPV) traverse the membrane as a helical segment. Position 378 (A378) is a topological domain, periplasmic. The chain crosses the membrane as a helical span at residues 379–399 (SASASGFGLLIIGVLLLLVLV). The Cytoplasmic segment spans residues 400-416 (ELRRFRQTPPQVTASDG).

The protein belongs to the major facilitator superfamily. EntS (TC 2.A.1.38) family.

It is found in the cell inner membrane. Functionally, component of an export pathway for enterobactin. The chain is Enterobactin exporter EntS from Escherichia coli O157:H7.